A 298-amino-acid chain; its full sequence is MTLNTEQEAKTPLHRRASTPLPLSPRGHQPGRLSTVPSTQSQHPRLGQSASLNPPTQKPSPAPDDWSSESSDSEGSWEALYRVVLLGDPGVGKTSLASLFAGKQERDLHEQLGEDVYERTLTVDGEDTTLVVVDTWEAEKLDKSWSQESCLQGGSAYVIVYSIADRGSFESASELRIQLRRTHQADHVPIILVGNKADLARCREVSVEEGRACAVVFDCKFIETSATLQHNVAELFEGVVRQLRLRRRDSAAKEPPAPRRPASLAQRARRFLARLTARSARRRALKARSKSCHNLAVL.

Residues 1–73 are disordered; sequence MTLNTEQEAK…DDWSSESSDS (73 aa). Polar residues predominate over residues 35-55; it reads TVPSTQSQHPRLGQSASLNPP. At Ser-51 the chain carries Phosphoserine. Residues 63-73 are compositionally biased toward low complexity; sequence PDDWSSESSDS. GTP is bound by residues 87-94 and 195-198; these read GDPGVGKT and NKAD. Residues 268 to 287 are calmodulin-binding; sequence ARRFLARLTARSARRRALKA.

It belongs to the small GTPase superfamily. RGK family. In terms of assembly, in vitro, interacts with calmodulin in a calcium-dependent manner. As to expression, most highly expressed in the endothelial lining of the blood vessels in uterus and heart. Lower levels found in spleen, lymph node, kidney and testis. Also found in cells with secretory function such as the islets of Langerhans, lobule/duct epithelium in the breast, bile duct epithelium in the liver, surface epithelium in the endometrial glands of the uterus, colon mucosa and acinar cells in the pancreas and the prostate.

Its function is as follows. Promotes endothelial cell sprouting and actin cytoskeletal reorganization. May be involved in angiogenesis. May function in Ca(2+) signaling. The polypeptide is GTP-binding protein REM 1 (REM1) (Homo sapiens (Human)).